A 3122-amino-acid polypeptide reads, in one-letter code: DNA polymerase zeta catalytic subunit (3122 aa).

Disordered regions lie at residues Gln270 to Cys289, Gly425 to Gln457, Leu487 to Trp509, Leu524 to Ser545, and Thr842 to Asn886. Over residues Glu277–Ser286 the composition is skewed to polar residues. The segment covering Glu497–Trp509 has biased composition (acidic residues). 2 stretches are compositionally biased toward polar residues: residues Asp533–Ser545 and Thr842–Asp860. Ser1029 carries the post-translational modification Phosphoserine. 7 disordered regions span residues Tyr1034 to Phe1075, Val1154 to Ile1285, Val1429 to Thr1453, Lys1538 to Asp1616, Asn1842 to Pro1869, Asn1959 to Asn1979, and Ala2091 to Ser2138. The residue at position 1040 (Thr1040) is a Phosphothreonine. 2 stretches are compositionally biased toward basic residues: residues Lys1042–Arg1063 and Lys1166–Ala1179. The segment covering Arg1215–Ala1239 has biased composition (basic and acidic residues). Over residues Pro1243–Gly1270 the composition is skewed to polar residues. The segment covering Val1429–Thr1440 has biased composition (low complexity). Polar residues-rich tracts occupy residues Cys1441–Thr1453 and Lys1538–Ser1561. Residues Lys1566–Lys1587 are compositionally biased toward basic residues. Basic and acidic residues predominate over residues Pro1588–Val1598. Positions Asn1602–Asp1615 are enriched in polar residues. Residues Val1844–Asp1895 form a mediates interaction with MAD2L2 region. The segment covering Thr1846–Pro1859 has biased composition (low complexity). Residues Leu1860–Pro1869 are compositionally biased toward polar residues. Residue Ser1964 is modified to Phosphoserine. Zn(2+) contacts are provided by Cys3034, Cys3037, Cys3046, and Cys3049. Residues Cys3034–Cys3049 form a CysA-type zinc finger. Positions 3078, 3081, 3091, and 3096 each coordinate [4Fe-4S] cluster. Positions Cys3078–Cys3096 match the CysB motif motif.

This sequence belongs to the DNA polymerase type-B family. Heterodimer with MAD2L2. This dimer forms the minimal DNA polymerase zeta complex (Pol-zeta2), with REV3L bearing DNA polymerase catalytic activity, although its activity is very low in this context. Component of the tetrameric Pol-zeta complex (Pol-zeta4), which consists of REV3L, MAD2L2, POLD2 and POLD3; Pol-zeta4 is the fully active form of DNA polymerase zeta. Requires [4Fe-4S] cluster as cofactor.

It localises to the nucleus. The catalysed reaction is DNA(n) + a 2'-deoxyribonucleoside 5'-triphosphate = DNA(n+1) + diphosphate. Its function is as follows. Catalytic subunit of the DNA polymerase zeta complex, an error-prone polymerase specialized in translesion DNA synthesis (TLS). Lacks an intrinsic 3'-5' exonuclease activity and thus has no proofreading function. In Mus musculus (Mouse), this protein is DNA polymerase zeta catalytic subunit (Rev3l).